The chain runs to 236 residues: Small ribosomal subunit protein uS2c (236 aa).

This sequence belongs to the universal ribosomal protein uS2 family.

Its subcellular location is the plastid. It localises to the chloroplast. This is Small ribosomal subunit protein uS2c (rps2) from Piper cenocladum (Ant piper).